The primary structure comprises 512 residues: Cytochrome P450 monooxygenase cheE (512 aa).

The helical transmembrane segment at Y5–A27 threads the bilayer. N-linked (GlcNAc...) asparagine glycosylation is found at N53, N124, and N168. A heme-binding site is contributed by C455. N-linked (GlcNAc...) asparagine glycosylation is found at N499 and N508.

This sequence belongs to the cytochrome P450 family. Heme is required as a cofactor.

It localises to the membrane. It functions in the pathway secondary metabolite biosynthesis. Functionally, cytochrome P450 monooxygenase; part of the gene cluster that mediates the biosynthesis of chaetoglobosin A which has a unique inhibitory activity against actin polymerization in mammalian cells. Chaetoglobosin A and its intermediates are involved in the morphological differentiation of C.globosum. The first step of the pathway is the synthesis of prochaetoglobosin I via condensation of one acetyl-CoA, 8 malonyl-CoA, and a L-tryptophan molecule by the PKS-NRPS hybrid synthetase cheA, followed by reduction of backbone double bond to install desired geometry by the enoyl reductase cheB. Further multiple oxidation steps performed by the cytochrome P450 monooxygenases cheE and cheG, as well as by the FAD-linked oxidoreductase cheF, lead to the formation of chaetoglobosin A. Depending on the order of action of these reductases, distinct intermediates can be identified. Within the pathway, the cytochrome P450 monooxygenase cheE catalyzes a stereospecific epoxidation on prochaetoglobosin I, cytoglobosin D, and chaetoglobosin J intermediates. The FAD-linked oxidoreductase cheF performs dehydrogenation of the C-20 hydroxyl groups in the 20-dihyrochaetoglobosin A and cytoglobosin D intermediates. Finally, the cytochrome P450 monooxygenase cheG can catalyze the stereospecific dihydroxylation of prochaetoglobosin I and prochaetoglobosin IV at C-19 and C-20, respectively. The Diels-Alderase cheD may play a role in the post-PKS-NRPS biosynthetic steps catalyzing Diels-Alder cyclization. This chain is Cytochrome P450 monooxygenase cheE, found in Chaetomium globosum (strain ATCC 6205 / CBS 148.51 / DSM 1962 / NBRC 6347 / NRRL 1970) (Soil fungus).